Reading from the N-terminus, the 101-residue chain is C-X-C motif chemokine 3 (101 aa).

The signal sequence occupies residues 1-32; it reads MAPPTRRLLNAALLLLLLLMATSHQPSGTVVA. Cystine bridges form between cysteine 37–cysteine 63 and cysteine 39–cysteine 79.

This sequence belongs to the intercrine alpha (chemokine CxC) family.

It localises to the secreted. Ligand for CXCR2. Has chemotactic activity for neutrophils. May play a role in inflammation and exert its effects on endothelial cells in an autocrine fashion. The chain is C-X-C motif chemokine 3 (Cxcl3) from Rattus norvegicus (Rat).